A 502-amino-acid polypeptide reads, in one-letter code: Probable cytosol aminopeptidase (502 aa).

Mn(2+) contacts are provided by lysine 275 and aspartate 280. Residue lysine 287 is part of the active site. Mn(2+) contacts are provided by aspartate 298, aspartate 357, and glutamate 359. Arginine 361 is a catalytic residue.

The protein belongs to the peptidase M17 family. Mn(2+) serves as cofactor.

It is found in the cytoplasm. It carries out the reaction Release of an N-terminal amino acid, Xaa-|-Yaa-, in which Xaa is preferably Leu, but may be other amino acids including Pro although not Arg or Lys, and Yaa may be Pro. Amino acid amides and methyl esters are also readily hydrolyzed, but rates on arylamides are exceedingly low.. The enzyme catalyses Release of an N-terminal amino acid, preferentially leucine, but not glutamic or aspartic acids.. In terms of biological role, presumably involved in the processing and regular turnover of intracellular proteins. Catalyzes the removal of unsubstituted N-terminal amino acids from various peptides. The protein is Probable cytosol aminopeptidase of Ralstonia pickettii (strain 12J).